Consider the following 507-residue polypeptide: Alpha-amylase 2 (507 aa).

An N-terminal signal peptide occupies residues 1 to 20 (MKFATILSTTALALSSLVAS). A disulfide bridge links Cys-62 with Cys-70. Trp-115 contacts substrate. Asn-153 contributes to the Ca(2+) binding site. His-154 contributes to the substrate binding site. A disulfide bridge connects residues Cys-182 and Cys-196. 2 residues coordinate Ca(2+): Glu-194 and Asp-207. N-linked (GlcNAc...) asparagine glycosylation occurs at Asn-229. Arg-236 is a binding site for substrate. Ca(2+)-binding residues include Asp-238, His-242, and Glu-262. Asp-238 serves as the catalytic Nucleophile. Substrate is bound at residue 241–242 (KH). Glu-262 serves as the catalytic Proton donor. Residue Gly-266 participates in substrate binding. Residues Cys-272 and Cys-315 are joined by a disulfide bond. Substrate is bound by residues Asp-329 and Arg-376. A disulfide bridge links Cys-470 with Cys-505.

The protein belongs to the glycosyl hydrolase 13 family. Requires Ca(2+) as cofactor.

The catalysed reaction is Endohydrolysis of (1-&gt;4)-alpha-D-glucosidic linkages in polysaccharides containing three or more (1-&gt;4)-alpha-linked D-glucose units.. In Schwanniomyces occidentalis (Yeast), this protein is Alpha-amylase 2 (SWA2).